A 405-amino-acid polypeptide reads, in one-letter code: Dynactin subunit 2 (405 aa).

Residues 1–24 form a disordered region; the sequence is MADPKYANLPGIASNEPDVYETSD. Coiled-coil stretches lie at residues 102–125 and 379–405; these read QQKYQRLVNEIHELCQDVEKIQTS and QQTMKENLLAVEENFSALDQRMKKLNK.

Belongs to the dynactin subunit 2 family. As to quaternary structure, subunit of dynactin, a multiprotein complex part of a tripartite complex with dynein and a adapter, such as BICDL1, BICD2 or HOOK3. The dynactin complex is built around ACTR1A/ACTB filament and consists of an actin-related filament composed of a shoulder domain, a pointed end and a barbed end. Its length is defined by its flexible shoulder domain. The soulder is composed of 2 DCTN1 subunits, 4 DCTN2 and 2 DCTN3.

It localises to the cytoplasm. Its subcellular location is the cytoskeleton. The protein localises to the microtubule organizing center. It is found in the centrosome. The protein resides in the membrane. Its function is as follows. Part of the dynactin complex that activates the molecular motor dynein for ultra-processive transport along microtubules. In the dynactin soulder domain, binds the ACTR1A filament and acts as a molecular ruler to determine the length. Modulates cytoplasmic dynein binding to an organelle, and plays a role in prometaphase chromosome alignment and spindle organization during mitosis. Involved in anchoring microtubules to centrosomes. This is Dynactin subunit 2 (dctn2) from Danio rerio (Zebrafish).